A 104-amino-acid polypeptide reads, in one-letter code: Viral histone-like protein (104 aa).

It belongs to the bacterial histone-like protein family. In terms of assembly, homodimer.

The protein resides in the virion. Its activity is regulated as follows. Stilbene derivatives SD1 and SD4 disrupt the binding between pA104R and DNA and inhibit the viral replication in primary alveolar macrophages. In terms of biological role, DNA-binding protein that plays a critical role in nucleoid compaction, genome replication and DNA replication and transcription. Binds to both ssDNA and dsDNA with a binding site covering about 15 nucleotides. Displays DNA-supercoiling activity only when associated with the viral DNA topoisomerase 2. This chain is Viral histone-like protein, found in African swine fever virus (strain Badajoz 1971 Vero-adapted) (Ba71V).